A 653-amino-acid chain; its full sequence is DNA polymerase (653 aa).

This sequence belongs to the DNA polymerase type-B family.

The enzyme catalyses DNA(n) + a 2'-deoxyribonucleoside 5'-triphosphate = DNA(n+1) + diphosphate. Functionally, replicates viral genomic DNA. The protein is DNA polymerase of Acidianus convivator (ABV).